The following is a 369-amino-acid chain: Protein VP6 (369 aa).

2 disordered regions span residues 17–169 (KREL…LQGR) and 184–208 (LDRI…GGDR). The segment covering 29–68 (LREKGSTEAKSKLKEDGEKKNKSEKEENKIHDDRRVESQK) has biased composition (basic and acidic residues). Gly residues predominate over residues 92–111 (TGGGDGSAGARTGIGGGGVG). Composition is skewed to basic and acidic residues over residues 137–148 (TGADRVANDDAT) and 196–208 (TEGE…GGDR).

The protein belongs to the orbivirus VP6 family.

Its subcellular location is the virion. The sequence is that of Protein VP6 (Segment-9) from African horse sickness virus (AHSV).